A 313-amino-acid chain; its full sequence is MKLVPRFRKQWFAYLTVLCLALAAAVSFGVPAKAAENPQTSVSNTGKEADATKNQTSKADQVSAPYEGTGKTSKSLYGGQTELEKNIQTLQPSSIIGTDERTRISSTTSFPYRATVQLSIKYPNTSSTYGCTGFLVNPNTVVTAGHCVYSQDHGWASTITAAPGRNGSSYPYGTYSGTMFYSVKGWTESKDTNYDYGAIKLNGSPGNTVGWYGYRTTNSSSPVGLSSSVTGFPCDKTFGTMWSDTKPIRSAETYKLTYTTDTYGCQSGSPVYRNYSDTGQTAIAIHTNGGSSYNLGTRVTNDVFNNIQYWANQ.

The N-terminal stretch at 1-34 (MKLVPRFRKQWFAYLTVLCLALAAAVSFGVPAKA) is a signal peptide. The tract at residues 35–74 (AENPQTSVSNTGKEADATKNQTSKADQVSAPYEGTGKTSK) is disordered. A propeptide spanning residues 35–93 (AENPQTSVSNTGKEADATKNQTSKADQVSAPYEGTGKTSKSLYGGQTELEKNIQTLQPS) is cleaved from the precursor. Positions 37–60 (NPQTSVSNTGKEADATKNQTSKAD) are enriched in polar residues. C131 and C147 are oxidised to a cystine. Residues H146 and S267 each act as charge relay system in the active site.

Belongs to the peptidase S1B family. In terms of assembly, monomer.

Its subcellular location is the secreted. This Bacillus subtilis (strain 168) protein is Extracellular metalloprotease (mpr).